We begin with the raw amino-acid sequence, 308 residues long: Ornithine carbamoyltransferase (308 aa).

Carbamoyl phosphate-binding positions include 55–58 (STRT), Gln82, Arg106, and 133–136 (HPCQ). Residues Asn164, Asp227, and 231 to 232 (SM) contribute to the L-ornithine site. Carbamoyl phosphate is bound by residues 267–268 (CL) and Arg295.

It belongs to the aspartate/ornithine carbamoyltransferase superfamily. OTCase family.

Its subcellular location is the cytoplasm. It carries out the reaction carbamoyl phosphate + L-ornithine = L-citrulline + phosphate + H(+). It participates in amino-acid biosynthesis; L-arginine biosynthesis; L-arginine from L-ornithine and carbamoyl phosphate: step 1/3. Functionally, reversibly catalyzes the transfer of the carbamoyl group from carbamoyl phosphate (CP) to the N(epsilon) atom of ornithine (ORN) to produce L-citrulline. The polypeptide is Ornithine carbamoyltransferase (Prochlorococcus marinus (strain MIT 9312)).